We begin with the raw amino-acid sequence, 258 residues long: Thiamine thiazole synthase (258 aa).

NAD(+) is bound by residues Ala-36, Glu-55–Lys-56, Gly-63, Val-127, and His-154–Asp-156. Residues Asp-156 and His-171 each coordinate Fe cation. Residue Met-224 coordinates NAD(+). Residue Arg-234 participates in glycine binding.

It belongs to the THI4 family. In terms of assembly, homooctamer; tetramer of dimers. Fe(2+) is required as a cofactor.

The catalysed reaction is hydrogen sulfide + glycine + NAD(+) = ADP-5-ethyl-4-methylthiazole-2-carboxylate + nicotinamide + 3 H2O + H(+). It functions in the pathway cofactor biosynthesis; thiamine diphosphate biosynthesis. Involved in the biosynthesis of the thiazole moiety of thiamine. Catalyzes the conversion of NAD and glycine to adenosine diphosphate 5-(2-hydroxyethyl)-4-methylthiazole-2-carboxylate (ADT), an adenylated thiazole intermediate, using free sulfide as a source of sulfur. This chain is Thiamine thiazole synthase, found in Methanococcoides burtonii (strain DSM 6242 / NBRC 107633 / OCM 468 / ACE-M).